The sequence spans 201 residues: 3-isopropylmalate dehydratase small subunit (201 aa).

This sequence belongs to the LeuD family. LeuD type 1 subfamily. As to quaternary structure, heterodimer of LeuC and LeuD.

It carries out the reaction (2R,3S)-3-isopropylmalate = (2S)-2-isopropylmalate. It functions in the pathway amino-acid biosynthesis; L-leucine biosynthesis; L-leucine from 3-methyl-2-oxobutanoate: step 2/4. Functionally, catalyzes the isomerization between 2-isopropylmalate and 3-isopropylmalate, via the formation of 2-isopropylmaleate. This is 3-isopropylmalate dehydratase small subunit from Escherichia coli O45:K1 (strain S88 / ExPEC).